We begin with the raw amino-acid sequence, 95 residues long: Small ribosomal subunit protein bS20 (95 aa).

The protein belongs to the bacterial ribosomal protein bS20 family.

In terms of biological role, binds directly to 16S ribosomal RNA. This chain is Small ribosomal subunit protein bS20, found in Fervidobacterium nodosum (strain ATCC 35602 / DSM 5306 / Rt17-B1).